The chain runs to 140 residues: Flagellar assembly factor FliW (140 aa).

The protein belongs to the FliW family. Interacts with translational regulator CsrA and flagellin(s).

It is found in the cytoplasm. Functionally, acts as an anti-CsrA protein, binds CsrA and prevents it from repressing translation of its target genes, one of which is flagellin. Binds to flagellin and participates in the assembly of the flagellum. This Syntrophotalea carbinolica (strain DSM 2380 / NBRC 103641 / GraBd1) (Pelobacter carbinolicus) protein is Flagellar assembly factor FliW.